The chain runs to 152 residues: Large ribosomal subunit protein uL22 (152 aa).

Low complexity predominate over residues 124-145 (APKKAAAKKAAPAKETTPAATE). The disordered stretch occupies residues 124–152 (APKKAAAKKAAPAKETTPAATESKTEGAE).

Belongs to the universal ribosomal protein uL22 family. In terms of assembly, part of the 50S ribosomal subunit.

Its function is as follows. This protein binds specifically to 23S rRNA; its binding is stimulated by other ribosomal proteins, e.g. L4, L17, and L20. It is important during the early stages of 50S assembly. It makes multiple contacts with different domains of the 23S rRNA in the assembled 50S subunit and ribosome. In terms of biological role, the globular domain of the protein is located near the polypeptide exit tunnel on the outside of the subunit, while an extended beta-hairpin is found that lines the wall of the exit tunnel in the center of the 70S ribosome. The polypeptide is Large ribosomal subunit protein uL22 (Salinispora tropica (strain ATCC BAA-916 / DSM 44818 / JCM 13857 / NBRC 105044 / CNB-440)).